The primary structure comprises 77 residues: ALNGITKSAQIGFGSFVDKTVLPFVNTHPEKLKNPCPEKNENCQPPFSFKHILNLTANGKEFQDQVGKQGISGNLDR.

Cys36 and Cys43 are oxidised to a cystine. The N-linked (GlcNAc...) asparagine glycan is linked to Asn54.

The protein belongs to the integrin beta chain family. In terms of assembly, dimer of an alpha and beta subunit.

The protein localises to the membrane. Functionally, integrins are a large family of cell surface glycoproteins that mediate cell to cell and cell to matrix adhesion. This is Integrin beta-2 (itgb2) from Xenopus laevis (African clawed frog).